The primary structure comprises 254 residues: Vitamin B12 import ATP-binding protein BtuD (254 aa).

The ABC transporter domain occupies 1-239; that stretch reads MHINHISVGN…ENLQQVFETP (239 aa). An ATP-binding site is contributed by 29–36; sequence GPNGSGKS.

It belongs to the ABC transporter superfamily. Vitamin B12 importer (TC 3.A.1.13.1) family. The complex is composed of two ATP-binding proteins (BtuD), two transmembrane proteins (BtuC) and a solute-binding protein (BtuF).

The protein localises to the cell inner membrane. The enzyme catalyses an R-cob(III)alamin(out) + ATP + H2O = an R-cob(III)alamin(in) + ADP + phosphate + H(+). Functionally, part of the ABC transporter complex BtuCDF involved in vitamin B12 import. Responsible for energy coupling to the transport system. This chain is Vitamin B12 import ATP-binding protein BtuD, found in Vibrio vulnificus (strain YJ016).